A 141-amino-acid polypeptide reads, in one-letter code: Alpha-lactalbumin (141 aa).

The first 19 residues, 1–19, serve as a signal peptide directing secretion; sequence MMPLVPLLLVSIVFPGIQA. The C-type lysozyme domain occupies 20–141; that stretch reads TQLTRCELTE…ENLEQWVCKK (122 aa). Cystine bridges form between cysteine 25–cysteine 139, cysteine 47–cysteine 130, cysteine 80–cysteine 96, and cysteine 92–cysteine 110. A glycan (N-linked (GlcNAc...) asparagine) is linked at asparagine 64. Residues aspartate 101, aspartate 106, and aspartate 107 each contribute to the Ca(2+) site.

This sequence belongs to the glycosyl hydrolase 22 family. As to quaternary structure, lactose synthase (LS) is a heterodimer of a catalytic component, beta1,4-galactosyltransferase (beta4Gal-T1) and a regulatory component, alpha-lactalbumin (LA). As to expression, mammary gland specific. Secreted in milk.

It is found in the secreted. Regulatory subunit of lactose synthase, changes the substrate specificity of galactosyltransferase in the mammary gland making glucose a good acceptor substrate for this enzyme. This enables LS to synthesize lactose, the major carbohydrate component of milk. In other tissues, galactosyltransferase transfers galactose onto the N-acetylglucosamine of the oligosaccharide chains in glycoproteins. The polypeptide is Alpha-lactalbumin (LALBA) (Oryctolagus cuniculus (Rabbit)).